Here is a 296-residue protein sequence, read N- to C-terminus: Ribosomal RNA small subunit methyltransferase H (296 aa).

S-adenosyl-L-methionine contacts are provided by residues 41–43 (GGH), Asp-60, Phe-87, Asp-103, and Gln-110.

This sequence belongs to the methyltransferase superfamily. RsmH family.

It localises to the cytoplasm. The catalysed reaction is cytidine(1402) in 16S rRNA + S-adenosyl-L-methionine = N(4)-methylcytidine(1402) in 16S rRNA + S-adenosyl-L-homocysteine + H(+). Its function is as follows. Specifically methylates the N4 position of cytidine in position 1402 (C1402) of 16S rRNA. This chain is Ribosomal RNA small subunit methyltransferase H, found in Synechococcus elongatus (strain ATCC 33912 / PCC 7942 / FACHB-805) (Anacystis nidulans R2).